Reading from the N-terminus, the 508-residue chain is DASH complex subunit ASK1 (508 aa).

Disordered regions lie at residues L86–S138 and S150–S355. The segment covering E116–S138 has biased composition (polar residues). A compositionally biased stretch (basic and acidic residues) spans Q161–D175. A compositionally biased stretch (acidic residues) spans D201 to E213. Residues R229 to E238 show a composition bias toward basic and acidic residues. Over residues Q239–G258 the composition is skewed to acidic residues. Basic and acidic residues predominate over residues I326 to W338.

The protein belongs to the DASH complex ASK1 family. As to quaternary structure, component of the DASH complex consisting of ASK1, DAD1, DAD2, DAD3, DAD4, DAM1, DUO1, HSK3, SPC19 and SPC34, with a stoichiometry of one copy of each subunit per complex. Multiple DASH complexes oligomerize to form a ring that encircles spindle microtubules and organizes the rod-like NDC80 complexes of the outer kinetochore. On cytoplasmic microtubules, DASH complexes appear to form patches instead of rings.

It is found in the chromosome. Its subcellular location is the centromere. The protein localises to the kinetochore. It localises to the cytoplasm. The protein resides in the cytoskeleton. It is found in the spindle. Its subcellular location is the nucleus. In terms of biological role, component of the DASH complex that connects microtubules with kinetochores and couples microtubule depolymerisation to chromosome movement; it is involved in retrieving kinetochores to the spindle poles before their re-orientation on the spindle in early mitosis and allows microtubule depolymerization to pull chromosomes apart and resist detachment during anaphase. Kinetochores, consisting of a centromere-associated inner segment and a microtubule-contacting outer segment, play a crucial role in chromosome segregation by mediating the physical connection between centromeric DNA and microtubules. Kinetochores also serve as an input point for the spindle assembly checkpoint, which delays anaphase until all chromosomes have bioriented on the mitotic spindle. The sequence is that of DASH complex subunit ASK1 from Chaetomium thermophilum (strain DSM 1495 / CBS 144.50 / IMI 039719) (Thermochaetoides thermophila).